A 301-amino-acid polypeptide reads, in one-letter code: Possible hemolysin C (301 aa).

CBS domains lie at 79–141 and 144–201; these read MVPR…NFRL and LIRK…IDDE.

It belongs to the UPF0053 family. Hemolysin C subfamily.

This is Possible hemolysin C (tlyC) from Rickettsia bellii (strain RML369-C).